Consider the following 279-residue polypeptide: Undecaprenyl-diphosphatase (279 aa).

The next 8 helical transmembrane spans lie at 1-21 (MVLE…LPIS), 39-59 (GRFF…LYFF), 96-116 (LLLV…VRFV), 128-148 (FTMG…DALF), 155-175 (IFQI…FAII), 201-221 (FSFL…LVAG), 231-251 (YSLI…SALL), and 259-279 (FVLF…VSFF).

It belongs to the UppP family.

The protein resides in the cell membrane. The enzyme catalyses di-trans,octa-cis-undecaprenyl diphosphate + H2O = di-trans,octa-cis-undecaprenyl phosphate + phosphate + H(+). Catalyzes the dephosphorylation of undecaprenyl diphosphate (UPP). Confers resistance to bacitracin. In Tropheryma whipplei (strain TW08/27) (Whipple's bacillus), this protein is Undecaprenyl-diphosphatase.